Consider the following 584-residue polypeptide: Isopropyl malate synthase htyA (584 aa).

In terms of domain architecture, Pyruvate carboxyltransferase spans 39–317 (PIWLSTDLRD…ETGLDFSNLP (279 aa)).

This sequence belongs to the alpha-IPM synthase/homocitrate synthase family. LeuA type 2 subfamily.

It carries out the reaction 3-methyl-2-oxobutanoate + acetyl-CoA + H2O = (2S)-2-isopropylmalate + CoA + H(+). It participates in antifungal biosynthesis. Isopropyl malate synthase; part of the gene cluster that mediates the de novo generation of L-homotyrosine from acetyl-CoA and 4-hydroxyphenyl-pyruvate. L-homotyrosine is a building block of echinocandin B, a fungal lipidated cyclic hexapeptide that acts as an antifungal agent. L-homotyrosine 4-hydroxyphenyl-pyruvate first undergoes an aldol-type condensation by htyA with the C-2 of acetyl-CoA followed by the release of CoA to form 2-(4-hydroxybenzyl)-malate. This is followed by isomerization of 2-(4-hydroxy-benzyl)-malate to 3-(4-hydroxybenzyl)-malate by htyD. Thereafter, 3-(4-hydroxybenzyl)-malate undergoes decarboxylation and oxidation to form 2-oxo-4-(4-hydroxybenzyl)butanoic acid, coupled to reduction of NAD(+) to NADH by htyC. The product then undergoes transamination catalyzed by htyB to form L-homotyrosine. This Aspergillus rugulosus (Emericella rugulosa) protein is Isopropyl malate synthase htyA.